Here is a 159-residue protein sequence, read N- to C-terminus: Small ribosomal subunit protein uS9 (159 aa).

It belongs to the universal ribosomal protein uS9 family.

The sequence is that of Small ribosomal subunit protein uS9 from Bradyrhizobium diazoefficiens (strain JCM 10833 / BCRC 13528 / IAM 13628 / NBRC 14792 / USDA 110).